A 2093-amino-acid polypeptide reads, in one-letter code: Nuclear-pore anchor (2093 aa).

Coiled coils occupy residues 57–362, 439–529, 570–627, and 688–1172; these read LEQK…TDEL, MILQ…RDVQ, DING…RAEE, and QEKA…LEAK. Positions 1175–1198 are disordered; that stretch reads NSAEKNSRSGTISSGSTDSDHLED. Positions 1182-1191 are enriched in low complexity; it reads RSGTISSGST. Coiled-coil stretches lie at residues 1208–1252 and 1293–1585; these read LRRT…AERA and EKCQ…LKHA. Disordered stretches follow at residues 1453–1489, 1525–1555, and 1627–2093; these read YEKEKDELSKQNQSLAKQLEEAKEEAGKRTTTDAVVE, KKDEELTKERSERKSVEKEVGDSLTKIKKEK, and SNSQ…PSPP. Positions 1470–1483 are enriched in basic and acidic residues; sequence QLEEAKEEAGKRTT. The span at 1652-1674 shows a compositional bias: polar residues; the sequence is STMTRVPSSTPLIKSPVATTQQL. 2 stretches are compositionally biased toward basic and acidic residues: residues 1710–1719 and 1729–1740; these read KPEESPKVDV and DEGKQPAAHEPE. A compositionally biased stretch (polar residues) spans 1764-1779; sequence SEPQQDSLTQGETSSE. Basic and acidic residues predominate over residues 1789–1808; that stretch reads KGSESHPDTSEGENLAKEPA. Residues 1818–1849 are a coiled coil; the sequence is TTDGDNEETEAENAEEKTEEYVEAQQDNEADE. 2 stretches are compositionally biased toward acidic residues: residues 1821–1830 and 1838–1903; these read GDNEETEAEN and YVEA…EEGT. The segment covering 1921–1931 has biased composition (polar residues); the sequence is TLATPTQSPSR. A compositionally biased stretch (acidic residues) spans 1935–1963; sequence AMEEAETTIETPVEDDKTDEGGDAAEEAA. Positions 1984-2009 are enriched in low complexity; sequence TSAATTSPVSTAPTTSSTLASAITSS. Phosphoserine is present on Ser-2022.

In terms of assembly, part of the nuclear pore complex (NPC). The NPC has an eight-fold symmetrical structure comprising a central transport channel and two rings, the cytoplasmic and nuclear rings, to which eight filaments are attached. The cytoplasmic filaments have loose ends, while the nuclear filaments are joined in a distal ring, forming a nuclear basket. NPCs are highly dynamic in configuration and composition, and can be devided in 3 subcomplexes, the NUP62 subcomplex, the NUP107-160 subcomplex and the NUP93 subcomplex, containing approximately 30 different nucleoporin proteins. Interacts with MAD1 and (via N-terminus) with ESD4. Ubiquitous. Highest expression in the shoot apical region.

It is found in the nucleus envelope. The protein resides in the nucleus membrane. It localises to the nucleus. The protein localises to the nuclear pore complex. In terms of biological role, component of the nuclear pore complex. Acts as a docking site for activities required for desumoylation and mRNA export. Required for the proper expression or localization of a subset of miRNAs. Plays a role in meristematic cell division by interacting with spindle assembly checkpoint proteins. The polypeptide is Nuclear-pore anchor (Arabidopsis thaliana (Mouse-ear cress)).